The sequence spans 467 residues: L-histidine transporter HutT (467 aa).

13 consecutive transmembrane segments (helical) span residues 18–38, 39–59, 71–91, 99–119, 125–145, 155–175, 200–220, 245–265, 280–300, 334–354, 358–378, 402–422, and 429–449; these read FMALGSAIGTGLFYGSASAIQ, MAGPAVLLAYLIGGAAVFMVM, VAGSFGHYATTYLGPMAGFIL, MVIVAIADVTAFGIYMGFWFP, IWVLGIVFLIGGLNLCNVKVF, LKVGAIVAMILAGLGIMAFGF, VGGLIASFAVVMFAFGGIEII, ILLFYVLTLFVLMCLYPWPQI, GIGSAAAVLNVVVISAAISAI, WMTVVVMGAALLIGVLLNYLI, VFLLIASIATFATVWVWLMIL, FWPYGPAMAIAFMVFIFGVLG, and AALIVGVIWVVFLVASYLLWC.

The protein belongs to the amino acid-polyamine-organocation (APC) superfamily. Amino acid transporter (AAT) (TC 2.A.3.1) family.

The protein resides in the cell inner membrane. It carries out the reaction L-histidine(out) + n H(+)(out) = L-histidine(in) + n H(+)(in). With respect to regulation, transport activity is inhibited by the proton ionophores carbonyl cyanide m-chlorophenyl hydrazine (CCCP) and 2,4-dinitrophenol (DNP), but not by valinomycin, nigericin and nonactin. Uptake is reduced in the presence of the sulfhydryl reagent N-ethylmaleimide (NEM). Uptake is not affected by arginine, lysine, proline or compounds structurally related to histidine such as imidazole, 3-amino-1,2,4-triazole and urocanate. Only 1,2,4-triazolyl-3-alanine reduces the rate of L-histidine uptake significantly. Major high-affinity histidine transporter. Binds and catalyzes the uptake of histidine into the cell. Functions as an histidine:proton symporter with high specificity for histidine. The polypeptide is L-histidine transporter HutT (Pseudomonas putida (strain ATCC 47054 / DSM 6125 / CFBP 8728 / NCIMB 11950 / KT2440)).